The chain runs to 222 residues: Transcriptional regulatory protein PmrA (222 aa).

Residues 2–116 (KLLIVEDDKL…ELQARVRALI (115 aa)) enclose the Response regulatory domain. At Asp-51 the chain carries 4-aspartylphosphate. A DNA-binding region (ompR/PhoB-type) is located at residues 124–218 (NSKIQVDNIT…LRGFGYLLTK (95 aa)).

In terms of processing, phosphorylated by PmrB.

The protein resides in the cytoplasm. In terms of biological role, member of the two-component regulatory system PmrB/PmrA involved in regulation of virulence. Unphosphorylated PmrA represses extracellular enzyme genes. Phosphorylation of PmrA by PmrB relieves such repression, which leads to activation of extracellular enzyme genes. Phosphorylated PmrA seems to repress expression of the pmrCAB operon. This chain is Transcriptional regulatory protein PmrA (pmrA), found in Pectobacterium parmentieri.